The chain runs to 688 residues: Polyribonucleotide nucleotidyltransferase (688 aa).

Asp484 and Asp490 together coordinate Mg(2+). Residues 550 to 609 form the KH domain; it reads PTTEIFNVAPDKIVEIIGQGGRVIKEIVEKFEVKIDLNKPSGEVKIMGNKERVLKTKEFI. One can recognise an S1 motif domain in the interval 626 to 688; it reads DEVLEAQVKR…NKGKIALDLA (63 aa).

Belongs to the polyribonucleotide nucleotidyltransferase family. Requires Mg(2+) as cofactor.

It is found in the cytoplasm. The enzyme catalyses RNA(n+1) + phosphate = RNA(n) + a ribonucleoside 5'-diphosphate. In terms of biological role, involved in mRNA degradation. Catalyzes the phosphorolysis of single-stranded polyribonucleotides processively in the 3'- to 5'-direction. This Helicobacter pylori (strain HPAG1) protein is Polyribonucleotide nucleotidyltransferase.